Consider the following 121-residue polypeptide: Large ribosomal subunit protein uL18 (121 aa).

Belongs to the universal ribosomal protein uL18 family. In terms of assembly, part of the 50S ribosomal subunit; part of the 5S rRNA/L5/L18/L25 subcomplex. Contacts the 5S and 23S rRNAs.

This is one of the proteins that bind and probably mediate the attachment of the 5S RNA into the large ribosomal subunit, where it forms part of the central protuberance. This Ehrlichia canis (strain Jake) protein is Large ribosomal subunit protein uL18.